The sequence spans 528 residues: Bifunctional pantoate ligase/cytidylate kinase (528 aa).

Positions 1–293 (MRLFTTIAGL…IGSCRLIDNI (293 aa)) are pantoate--beta-alanine ligase. 34–41 (MGALHKGH) is an ATP binding site. The active-site Proton donor is the histidine 41. Glutamine 65 serves as a coordination point for (R)-pantoate. Glutamine 65 lines the beta-alanine pocket. 160–163 (GQKD) contributes to the ATP binding site. Residue glutamine 166 coordinates (R)-pantoate. Residues isoleucine 189 and 197-200 (ISSR) each bind ATP. The tract at residues 294 to 528 (LLRNRKPIIA…YGKSSVNNII (235 aa)) is cytidylate kinase.

This sequence in the N-terminal section; belongs to the pantothenate synthetase family. In the C-terminal section; belongs to the cytidylate kinase family. Type 1 subfamily.

The protein localises to the cytoplasm. It catalyses the reaction (R)-pantoate + beta-alanine + ATP = (R)-pantothenate + AMP + diphosphate + H(+). The catalysed reaction is CMP + ATP = CDP + ADP. It carries out the reaction dCMP + ATP = dCDP + ADP. It functions in the pathway cofactor biosynthesis; (R)-pantothenate biosynthesis; (R)-pantothenate from (R)-pantoate and beta-alanine: step 1/1. Catalyzes the condensation of pantoate with beta-alanine in an ATP-dependent reaction via a pantoyl-adenylate intermediate. Functionally, catalyzes the transfer of a phosphate group from ATP to either CMP or dCMP to form CDP or dCDP and ADP, respectively. The polypeptide is Bifunctional pantoate ligase/cytidylate kinase (Trichodesmium erythraeum (strain IMS101)).